Consider the following 36-residue polypeptide: Pancreatic polypeptide (36 aa).

A Tyrosine amide modification is found at Y36.

Belongs to the NPY family.

Its subcellular location is the secreted. Hormone secreted by pancreatic cells that acts as a regulator of pancreatic and gastrointestinal functions probably by signaling through the G protein-coupled receptor NPY4R2. This chain is Pancreatic polypeptide (PPY), found in Erinaceus europaeus (Western European hedgehog).